The following is a 188-amino-acid chain: MSRGAAGWCCLVLWLPTCVAAHGLRIHDYLYFQVLSPGDIRYIFTATPAKDFGGIFHTRYEQIHLVPAEPPEACGELSNGFFIQDQIALVERGGCSFLSKTRVVQEHGGRAVIISDNAVDNDSFYVEMIQDSTQRTADIPALFLLGRDGYMIRRSLEQHGLPWAIISIPVNVTSIPTFELLQPPWTFW.

Residues 1 to 21 (MSRGAAGWCCLVLWLPTCVAA) form the signal peptide. The region spanning 83 to 163 (IQDQIALVER…RSLEQHGLPW (81 aa)) is the PA domain. N-linked (GlcNAc...) asparagine glycosylation is found at N121 and N171.

In terms of processing, N-glycosylated; required for efficient secretion. As to expression, expressed in metabolically active tissues such as liver, muscle, adipose, and heart and different brain regions like cortex and hypothalamus, expression is acutely regulated by the nutritional state.

Its subcellular location is the secreted. Its function is as follows. Plays a role in the modulation of physical activity and adiposity. The polypeptide is Protease-associated domain-containing protein 1 (Mus musculus (Mouse)).